A 323-amino-acid polypeptide reads, in one-letter code: Serine/threonine-protein phosphatase PP1-gamma catalytic subunit (323 aa).

A2 is subject to N-acetylalanine. Mn(2+) is bound by residues D64, H66, D92, and N124. Residue H125 is the Proton donor of the active site. The Mn(2+) site is built by H173 and H248. 2 positions are modified to phosphothreonine: T307 and T311.

This sequence belongs to the PPP phosphatase family. PP-1 subfamily. As to quaternary structure, PP1 comprises a catalytic subunit, PPP1CA, PPP1CB or PPP1CC, which is folded into its native form by inhibitor 2 and glycogen synthetase kinase 3, and then complexed to one or several targeting or regulatory subunits. PPP1R12A, PPP1R12B and PPP1R12C mediate binding to myosin. PPP1R3A (in skeletal muscle), PPP1R3B (in liver), PPP1R3C, PPP1R3D and PPP1R3F (in brain) mediate binding to glycogen. PPP1R15A and PPP1R15B mediate binding to EIF2S1. Part of a complex containing PPP1R15B, PP1 and NCK1/2. Interacts with PPP1R3B, PPP1R7 and CDCA2. Interacts with IKFZ1; the interaction targets PPP1CC to pericentromeric heterochromatin, dephosphorylates IKAROS, stabilizes it and prevents it from degradation. Interacts with NOM1 and PPP1R8. Component of the PTW/PP1 phosphatase complex, composed of PPP1R10/PNUTS, TOX4, WDR82, and PPP1CA or PPP1CB or PPP1CC. Interacts with PPP1R8. Interacts with NEK2. Interacts with PPP1R42; the interaction is direct. Interacts with URI1; the interaction is phosphorylation-dependent and occurs in a growth factor-dependent manner. Interacts with FOXP3. Interacts with TMEM225 (via RVxF motif). Interacts with MKI67. Interacts with RRP1B; this targets PPP1CC to the nucleolus. Interacts with DYNLT4. Interacts (via RVxF motif) with FIRRM; regulates PLK1 kinase activity. Interacts with the KNL1 complex subunit KNL1; the interaction is direct and mutually exclusive with KNL1 binding to microtubules. Component of the SHOC2-MRAS-PP1c (SMP) complex consisting of SHOC2, GTP-bound M-Ras/MRAS and the catalytic subunit of protein phosphatase 1 (either PPP1CA, PPP1CB or PPP1CC). SHOC2 and PP1c preferably bind M-Ras/MRAS, but they also bind K-Ras/KRAS, N-Ras/NRAS and H-Ras/HRAS; these interactions are GTP-dependent and both SHOC2 and PP1c are required to form a stable complex. Interacts with SHOC2 in the absence of Ras GTPases. Mn(2+) is required as a cofactor. Post-translationally, phosphorylated by NEK2.

The protein resides in the cytoplasm. It is found in the nucleus. It localises to the cleavage furrow. Its subcellular location is the nucleolus. The protein localises to the nucleoplasm. The protein resides in the chromosome. It is found in the centromere. It localises to the kinetochore. Its subcellular location is the nucleus speckle. The protein localises to the midbody. The protein resides in the mitochondrion. It is found in the cytoskeleton. It localises to the microtubule organizing center. It carries out the reaction O-phospho-L-seryl-[protein] + H2O = L-seryl-[protein] + phosphate. The catalysed reaction is O-phospho-L-threonyl-[protein] + H2O = L-threonyl-[protein] + phosphate. With respect to regulation, inactivated by binding to URI1. In terms of biological role, protein phosphatase that associates with over 200 regulatory proteins to form highly specific holoenzymes which dephosphorylate hundreds of biological targets. Protein phosphatase 1 (PP1) is essential for cell division, and participates in the regulation of glycogen metabolism, muscle contractility and protein synthesis. Dephosphorylates RPS6KB1. Involved in regulation of ionic conductances and long-term synaptic plasticity. May play an important role in dephosphorylating substrates such as the postsynaptic density-associated Ca(2+)/calmodulin dependent protein kinase II. Component of the PTW/PP1 phosphatase complex, which plays a role in the control of chromatin structure and cell cycle progression during the transition from mitosis into interphase. Regulates the recruitment of the SKA complex to kinetochores. Core component of the SHOC2-MRAS-PP1c (SMP) holophosphatase complex that regulates the MAPK pathway activation. Dephosphorylates MKI67 at the onset of anaphase. The SMP complex specifically dephosphorylates the inhibitory phosphorylation at 'Ser-259' of RAF1 kinase, 'Ser-365' of BRAF kinase and 'Ser-214' of ARAF kinase, stimulating their kinase activities. The SMP complex enhances the dephosphorylation activity and substrate specificity of PP1c. The polypeptide is Serine/threonine-protein phosphatase PP1-gamma catalytic subunit (PPP1CC) (Canis lupus familiaris (Dog)).